We begin with the raw amino-acid sequence, 513 residues long: Maturase K (513 aa).

The protein belongs to the intron maturase 2 family. MatK subfamily.

It is found in the plastid. The protein resides in the chloroplast. In terms of biological role, usually encoded in the trnK tRNA gene intron. Probably assists in splicing its own and other chloroplast group II introns. The sequence is that of Maturase K from Saccharum officinarum (Sugarcane).